Consider the following 382-residue polypeptide: Cytochrome b (382 aa).

Transmembrane regions (helical) follow at residues 36–56 (FGSL…FLTM), 80–101 (WLIR…YLHI), 116–136 (WFIG…GYVL), and 181–201 (FYTF…IHLL). Residues His-86 and His-100 each contribute to the heme b site. Heme b-binding residues include His-185 and His-199. Residue His-204 coordinates a ubiquinone. 4 helical membrane-spanning segments follow: residues 229 to 249 (YKDL…TLSN), 291 to 311 (LGGV…PLTF), 323 to 343 (INQF…WIGA), and 350 to 370 (YIIT…LNPL).

This sequence belongs to the cytochrome b family. The main subunits of complex b-c1 are: cytochrome b, cytochrome c1 and the Rieske protein. Heme b is required as a cofactor.

Its subcellular location is the mitochondrion inner membrane. Component of the ubiquinol-cytochrome c reductase complex (complex III or cytochrome b-c1 complex) that is part of the mitochondrial respiratory chain. The b-c1 complex mediates electron transfer from ubiquinol to cytochrome c. Contributes to the generation of a proton gradient across the mitochondrial membrane that is then used for ATP synthesis. This Samia ricini (Indian eri silkmoth) protein is Cytochrome b (MT-CYB).